Reading from the N-terminus, the 249-residue chain is Vesicle-associated membrane protein-associated protein A (249 aa).

Position 2 is an N-acetylalanine (A2). Residues 2–227 are Cytoplasmic-facing; it reads ASASGAMAKH…ASFRDNVTSP (226 aa). The MSP domain occupies 14-131; that stretch reads ILVLDPPTDL…MDSKLRCVFE (118 aa). Residues 50 to 53 form a phosphorylated FFAT motif binding region; it reads KVKT. An N6-acetyllysine modification is found at K125. Basic and acidic residues predominate over residues 135-144; the sequence is ENDKLNDMEP. Residues 135–167 are disordered; it reads ENDKLNDMEPSKAVPLNASKQDGPMPKPHSVSL. Phosphoserine is present on S166. Residues 169-205 adopt a coiled-coil conformation; sequence DTETRKLMEECKRLQGEMMKLSEENRHLRDEGLRLRK. T170 is modified (phosphothreonine). Phosphoserine occurs at positions 214, 216, and 219. The helical; Anchor for type IV membrane protein transmembrane segment at 228 to 248 threads the bilayer; sequence LPSLLVVIAAIFIGFFLGKFI.

The protein belongs to the VAMP-associated protein (VAP) (TC 9.B.17) family. In terms of assembly, homodimer; disulfide-linked. Heterodimer with VAPB. Interacts with VAMP1, VAMP2, STX1A, BET1, SEC22C and with the C-terminal domain of OCLN. Interacts (via MSP domain) with OSBPL1A (via FFAT motif). Interacts (via MSP domain) with ZFYVE27; may retain ZFYVE27 in the endoplasmic reticulum and regulate its function in cell projections formation. Interacts with OSBP. Interacts (via C-terminus) with RSAD2/viperin (via C-terminus). Interacts with IFITM3. Interacts with OSBPL3 (phosphorylated form). Interacts with KIF5A in a ZFYVE27-dependent manner. Interacts (via MSP domain) with STARD3 (via phosphorylated FFAT motif); this interaction recruits VAPA to the endosome. Interacts with STARD3NL (via FFAT motif). Interacts with CERT1. Interacts with PLEKHA3 and SACM1L to form a ternary complex. Interacts with VPS13A (via FFAT motif). Interacts with RB1CC1 (via phosphorylated FFAT motif), MIGA2 (via phosphorylated FFAT motif), RMDN3 (via phosphorylated FFAT motif), KCNB1 (via phosphorylated FFAT motif) and KCNB2 (via phosphorylated FFAT motif). Interacts (via MSP domain) with WDR44 (via FFAT-like motif); the interactions connect the endoplasmic reticulum (ER) with the endosomal tubule. As to quaternary structure, (Microbial infection) Interacts with HCV protein NS5A and NS5B. Ubiquitous.

The protein localises to the endoplasmic reticulum membrane. Its subcellular location is the cell membrane. The protein resides in the cell junction. It localises to the tight junction. It is found in the nucleus membrane. Its function is as follows. Endoplasmic reticulum (ER)-anchored protein that mediates the formation of contact sites between the ER and endosomes via interaction with FFAT motif-containing proteins such as STARD3 or WDR44. STARD3-VAPA interaction enables cholesterol transfer from the ER to endosomes. Via interaction with WDR44 participates in neosynthesized protein export. In addition, recruited to the plasma membrane through OSBPL3 binding. The OSBPL3-VAPA complex stimulates RRAS signaling which in turn attenuates integrin beta-1 (ITGB1) activation at the cell surface. With OSBPL3, may regulate ER morphology. May play a role in vesicle trafficking. The polypeptide is Vesicle-associated membrane protein-associated protein A (Homo sapiens (Human)).